Reading from the N-terminus, the 220-residue chain is Casparian strip membrane protein 4 (220 aa).

The tract at residues 1-39 (MDSRREVEESSTAPILESKRTRSNGKGKSIDGDHSPPHA) is disordered. Topologically, residues 1 to 60 (MDSRREVEESSTAPILESKRTRSNGKGKSIDGDHSPPHAATVVTTKATPLQKGGMKKGIA) are cytoplasmic. A helical transmembrane segment spans residues 61-81 (ILDFILRLGAIGAALGAAVIM). Over 82 to 108 (GTNEQILPFFTQFLQFHAQWDDFPMFK) the chain is Extracellular. A helical membrane pass occupies residues 109 to 129 (FFVVANGAAAGFLILSLPFSI). Residues 130–141 (VCIVRPLAAGPR) lie on the Cytoplasmic side of the membrane. The chain crosses the membrane as a helical span at residues 142-162 (FLLVIVDLVLMALVVAAASSA). Residues 163–194 (AAVVYLAHNGSQDANWNAICQQFTDFCQGSSL) are Extracellular-facing. A glycan (N-linked (GlcNAc...) asparagine) is linked at Asn-171. Residues 195–215 (AVVASFVASVFLACLVVVSSV) traverse the membrane as a helical segment. At 216 to 220 (ALKRT) the chain is on the cytoplasmic side.

This sequence belongs to the Casparian strip membrane proteins (CASP) family. In terms of assembly, homodimer and heterodimers.

It localises to the cell membrane. Functionally, regulates membrane-cell wall junctions and localized cell wall deposition. Required for establishment of the Casparian strip membrane domain (CSD) and the subsequent formation of Casparian strips, a cell wall modification of the root endodermis that determines an apoplastic barrier between the intraorganismal apoplasm and the extraorganismal apoplasm and prevents lateral diffusion. The protein is Casparian strip membrane protein 4 of Medicago truncatula (Barrel medic).